Consider the following 271-residue polypeptide: Interleukin-1 alpha (271 aa).

A propeptide spanning residues 1–112 is cleaved from the precursor; it reads MAKVPDMFED…DSEEEIIKPR (112 aa). Lysine 82 bears the N6-acetyllysine mark. N6-myristoyl lysine attachment occurs at residues lysine 82 and lysine 83. The nuclear localization signal (NLS) stretch occupies residues 82–86; that stretch reads KKRRL. At serine 87 the chain carries Phosphoserine. N-linked (GlcNAc...) asparagine glycans are attached at residues asparagine 102 and asparagine 141.

It belongs to the IL-1 family. As to quaternary structure, monomer. Interacts with TMED10; the interaction mediates the translocation from the cytoplasm into the ERGIC (endoplasmic reticulum-Golgi intermediate compartment) and thereby secretion. Interacts with IL1R1. Interacts with S100A13; this interaction is the first step in the export of IL1A, followed by direct translocation of this complex across the plasma membrane. Acetylated within its nuclear localization sequence, which impacts subcellular localization. Post-translationally, proteolytic processed by CAPN1 in a calcium-dependent manner. Cleavage from 31 kDa precursor to 18 kDa biologically active molecules. In terms of processing, phosphorylated. Phosphorylation greatly enhances susceptibility to digestion and promotes the conversion of pre-IL1A alpha to the biologically active IL1A.

The protein localises to the nucleus. Its subcellular location is the cytoplasm. It is found in the secreted. Its function is as follows. Cytokine constitutively present intracellularly in nearly all resting non-hematopoietic cells that plays an important role in inflammation and bridges the innate and adaptive immune systems. After binding to its receptor IL1R1 together with its accessory protein IL1RAP, forms the high affinity interleukin-1 receptor complex. Signaling involves the recruitment of adapter molecules such as MYD88, IRAK1 or IRAK4. In turn, mediates the activation of NF-kappa-B and the three MAPK pathways p38, p42/p44 and JNK pathways. Within the cell, acts as an alarmin and cell death results in its liberation in the extracellular space after disruption of the cell membrane to induce inflammation and alert the host to injury or damage. In addition to its role as a danger signal, which occurs when the cytokine is passively released by cell necrosis, directly senses DNA damage and acts as a signal for genotoxic stress without loss of cell integrity. This Homo sapiens (Human) protein is Interleukin-1 alpha (IL1A).